The primary structure comprises 396 residues: Probable sugar efflux transporter (396 aa).

Transmembrane regions (helical) follow at residues Val15 to Leu35, Val50 to Leu70, Leu81 to Phe101, Val103 to Ala123, Ala136 to Ile156, Thr169 to Pro189, Pro209 to Tyr229, Phe246 to Gly266, Ser275 to Ala295, Leu301 to Val321, Val333 to Gly353, and Ala364 to Phe384.

The protein belongs to the major facilitator superfamily. SotB (TC 2.A.1.2) family.

It is found in the cell inner membrane. In terms of biological role, involved in the efflux of sugars. The physiological role may be the reduction of the intracellular concentration of toxic sugars or sugar metabolites. This chain is Probable sugar efflux transporter, found in Salmonella agona (strain SL483).